We begin with the raw amino-acid sequence, 376 residues long: Glucose-1-phosphate adenylyltransferase (376 aa).

Alpha-D-glucose 1-phosphate contacts are provided by residues Tyr-101, Gly-166, 181–182 (EK), and Ser-192.

This sequence belongs to the bacterial/plant glucose-1-phosphate adenylyltransferase family. As to quaternary structure, homotetramer.

It carries out the reaction alpha-D-glucose 1-phosphate + ATP + H(+) = ADP-alpha-D-glucose + diphosphate. The protein operates within glycan biosynthesis; glycogen biosynthesis. In terms of biological role, involved in the biosynthesis of ADP-glucose, a building block required for the elongation reactions to produce glycogen. Catalyzes the reaction between ATP and alpha-D-glucose 1-phosphate (G1P) to produce pyrophosphate and ADP-Glc. The polypeptide is Glucose-1-phosphate adenylyltransferase (Bacillus cytotoxicus (strain DSM 22905 / CIP 110041 / 391-98 / NVH 391-98)).